A 91-amino-acid chain; its full sequence is Probable translocation protein y4yM (91 aa).

Helical transmembrane passes span 15–35 (VVFM…GLTI) and 55–75 (LLVV…PLIE).

Belongs to the FliQ/MopD/SpaQ family.

It localises to the cell membrane. Functionally, could be involved in the secretion of an unknown factor. The sequence is that of Probable translocation protein y4yM from Sinorhizobium fredii (strain NBRC 101917 / NGR234).